Consider the following 741-residue polypeptide: Eukaryotic translation initiation factor 3 subunit B (741 aa).

Residues 1-10 (MAPSFDTLSE) are compositionally biased toward polar residues. Positions 1–21 (MAPSFDTLSEQDLHEEEEEEI) are disordered. The 87-residue stretch at 40–126 (TFIVIDGLPI…HTLAVNKLMD (87 aa)) folds into the RRM domain. WD repeat units lie at residues 193 to 230 (AHWT…KQKQ), 232 to 289 (PHPF…RSFV), 303 to 344 (APKK…LLGK), 514 to 557 (IEKK…EKAE), and 572 to 610 (VEHY…HTFA). Positions 696-723 (DAYGIPEDADDAKVAKDAPPVSEDQGEA) are disordered.

It belongs to the eIF-3 subunit B family. Component of the eukaryotic translation initiation factor 3 (eIF-3) complex.

The protein resides in the cytoplasm. RNA-binding component of the eukaryotic translation initiation factor 3 (eIF-3) complex, which is involved in protein synthesis of a specialized repertoire of mRNAs and, together with other initiation factors, stimulates binding of mRNA and methionyl-tRNAi to the 40S ribosome. The eIF-3 complex specifically targets and initiates translation of a subset of mRNAs involved in cell proliferation. This Aspergillus oryzae (strain ATCC 42149 / RIB 40) (Yellow koji mold) protein is Eukaryotic translation initiation factor 3 subunit B (prt1).